The chain runs to 188 residues: Photosystem I assembly protein Ycf4 (188 aa).

2 consecutive transmembrane segments (helical) span residues 26-48 and 68-90; these read MLWA…SSYF and AALT…VFFL.

Belongs to the Ycf4 family.

It localises to the cellular thylakoid membrane. In terms of biological role, seems to be required for the assembly of the photosystem I complex. The polypeptide is Photosystem I assembly protein Ycf4 (Picosynechococcus sp. (strain ATCC 27264 / PCC 7002 / PR-6) (Agmenellum quadruplicatum)).